The chain runs to 167 residues: Phospholipase A2 (167 aa).

The first 18 residues, 1–18 (MQVVLGSLFLLLLSTSHG), serve as a signal peptide directing secretion. A propeptide spanning residues 19 to 33 (WQIRDRIGDNELEER) is cleaved from the precursor. 3 residues coordinate Ca(2+): tryptophan 41, glycine 43, and glycine 45. 5 disulfides stabilise this stretch: cysteine 42–cysteine 64, cysteine 63–cysteine 103, cysteine 70–cysteine 96, cysteine 94–cysteine 128, and cysteine 138–cysteine 146. Asparagine 46 is a glycosylation site (N-linked (GlcNAc...) asparagine). Residue histidine 67 is part of the active site. A Ca(2+)-binding site is contributed by aspartate 68. The active site involves aspartate 97.

The protein belongs to the phospholipase A2 family. Group III subfamily. It depends on Ca(2+) as a cofactor. In terms of processing, N-glycosylated; contains mannose, N-acetylglucosamine and fucose alphal-6 and/or alphal-3 linked to the innermost N-acetylglucosamine. Expressed by the venom gland.

The protein localises to the secreted. It catalyses the reaction a 1,2-diacyl-sn-glycero-3-phosphocholine + H2O = a 1-acyl-sn-glycero-3-phosphocholine + a fatty acid + H(+). Functionally, in vivo, intraplantar injection in mice cause spontaneous pain behaviors and paw swelling. PLA2 catalyzes the calcium-dependent hydrolysis of the 2-acyl groups in 3-sn-phosphoglycerides. This is Phospholipase A2 from Apis mellifera (Honeybee).